We begin with the raw amino-acid sequence, 598 residues long: Vacuolin-A (598 aa).

Residues 482 to 539 (IKTTEARLKAETDNIALEQRNKAIISESQAKLSSAQREAESLLITAEAQKKASELQGE) are a coiled coil.

The protein belongs to the vacuolin family.

Its subcellular location is the endosome membrane. It is found in the lysosome. The polypeptide is Vacuolin-A (vacA) (Dictyostelium discoideum (Social amoeba)).